The sequence spans 418 residues: Beta-2 adrenergic receptor (418 aa).

Topologically, residues 1–34 are extracellular; that stretch reads MGQPGNRSVFLLAPNGSHAPDQDVPQERDEAWVV. N6 and N15 each carry an N-linked (GlcNAc...) asparagine glycan. Residues 35–58 traverse the membrane as a helical segment; that stretch reads GMAIVMSLIVLAIVFGNVLVITAI. Topologically, residues 59–71 are cytoplasmic; it reads AKFERLQTVTNYF. A helical transmembrane segment spans residues 72–95; sequence ITSLACADLVMGLAVVPFGASHIL. At 96–106 the chain is on the extracellular side; sequence MKMWTFGSFWC. 2 disulfides stabilise this stretch: C106-C191 and C184-C190. Residues 107–129 form a helical membrane-spanning segment; the sequence is EFWISIDVLCVTASIETLCVIAV. The Cytoplasmic portion of the chain corresponds to 130 to 150; the sequence is DRYLAITSPFKYQCLLTKNKA. At Y141 the chain carries Phosphotyrosine. A helical transmembrane segment spans residues 151–174; sequence RVVILMVWVVSGLISFLPIKMHWY. Residues 175-196 lie on the Extracellular side of the membrane; sequence QATHREALNCYAEEACCDFFTN. The chain crosses the membrane as a helical span at residues 197-220; it reads QPYAIASSIVSFYLPLVVMVFVYS. Residues 221–274 lie on the Cytoplasmic side of the membrane; the sequence is RVFQVARRQLQKIDKSEGRFHAQNLSQAEQDGRSGPGHRRSSKFCLKEHKALKT. S246 is modified (phosphoserine). Residues S261 and S262 each carry the phosphoserine; by PKA modification. C265 is lipidated: S-palmitoyl cysteine. A helical transmembrane segment spans residues 275 to 298; that stretch reads LGIIMGTFTLCWLPFFIVNIVHGI. At 299–305 the chain is on the extracellular side; sequence HDNLIPK. Residues 306-329 form a helical membrane-spanning segment; sequence EVYILLNWVGYVNSAFNPLIYCRS. Topologically, residues 330–418 are cytoplasmic; sequence PDFRMAFQEL…RNCSTNDSML (89 aa). C341 carries the S-palmitoyl cysteine lipid modification. Phosphoserine; by PKA occurs at positions 345 and 346. A phosphoserine; by BARK mark is found at S355 and S356. Residues 381-418 are disordered; it reads RLCEDAPGPEGCAHRQGTVPDDSTDSQGRNCSTNDSML. 4-hydroxyproline occurs at positions 387 and 400. The segment covering 405 to 418 has biased composition (polar residues); that stretch reads DSQGRNCSTNDSML. A PDZ-binding motif is present at residues 415 to 418; the sequence is DSML.

This sequence belongs to the G-protein coupled receptor 1 family. Adrenergic receptor subfamily. ADRB2 sub-subfamily. As to quaternary structure, binds NHERF1 and GPRASP1. Interacts with ARRB1 and ARRB2. Interacts with SRC. Interacts with USP20 and USP33. Interacts with VHL; the interaction, which is increased on hydroxylation of ADRB2, ubiquitinates ADRB2 leading to its degradation. Interacts with EGLN3; the interaction hydroxylates ADRB2 facilitating VHL-E3 ligase-mediated ubiquitination. Interacts (via PDZ-binding motif) with SNX27 (via PDZ domain); the interaction is required when endocytosed to prevent degradation in lysosomes and promote recycling to the plasma membrane. Interacts with CNIH4. Interacts with ARRDC3. Interacts with NEDD4. Interacts with MARCHF2. In terms of processing, palmitoylated; may reduce accessibility of Ser-345 and Ser-346 by anchoring Cys-341 to the plasma membrane. Agonist stimulation promotes depalmitoylation and further allows Ser-345 and Ser-346 phosphorylation. Post-translationally, phosphorylated by PKA and BARK upon agonist stimulation, which mediates homologous desensitization of the receptor. PKA-mediated phosphorylation seems to facilitate phosphorylation by BARK. Phosphorylation of Tyr-141 is induced by insulin and leads to supersensitization of the receptor. In terms of processing, polyubiquitinated. Agonist-induced ubiquitination leads to sort internalized receptors to the lysosomes for degradation. Deubiquitination by USP20 and USP33, leads to ADRB2 recycling and resensitization after prolonged agonist stimulation. USP20 and USP33 are constitutively associated and are dissociated immediately after agonist stimulation. Ubiquitination by the VHL-E3 ligase complex is oxygen-dependent. Post-translationally, hydroxylation by EGLN3 occurs only under normoxia and increases the interaction with VHL and the subsequent ubiquitination and degradation of ADRB2. Palmitoylated. Mainly palmitoylated at Cys-341. Palmitoylation may reduce accessibility of phosphorylation sites by anchoring the receptor to the plasma membrane. Agonist stimulation promotes depalmitoylation and further allows Ser-345 and Ser-346 phosphorylation. Also undergoes transient, ligand-induced palmitoylation at Cys-265 probably by ZDHHC9, ZDHHC14 and ZDHHC18 within the Golgi. Palmitoylation at Cys-265 requires phosphorylation by PKA and receptor internalization and stabilizes the receptor. Could be depalmitoylated by LYPLA1 at the plasma membrane. In terms of tissue distribution, expressed in heart, liver, lung, skeletal muscle and subcutaneous adipose tissue.

It is found in the cell membrane. Its subcellular location is the early endosome. It localises to the golgi apparatus. In terms of biological role, beta-adrenergic receptors mediate the catecholamine-induced activation of adenylate cyclase through the action of G proteins. The beta-2-adrenergic receptor binds epinephrine with an approximately 30-fold greater affinity than it does norepinephrine. The protein is Beta-2 adrenergic receptor (ADRB2) of Sus scrofa (Pig).